The following is a 505-amino-acid chain: Protein SDS23 (505 aa).

Disordered regions lie at residues 1–70 (MDKE…IPAS) and 85–104 (PPAVTPSRSRSSSAASNNQA). Over residues 15–40 (PSLAVPAPSQASPQSPQAALSPSNSS) the composition is skewed to low complexity. 4 CBS domains span residues 132 to 195 (MVQP…YVDA), 225 to 282 (AKDP…NGRL), 302 to 360 (PNPN…SHLL), and 382 to 468 (DSFP…NSDL). Disordered stretches follow at residues 414 to 441 (QPDVPSPQPSTPSGQPASKTHGPSHHAA) and 464 to 505 (GNSD…RGQR). Over residues 481–490 (SSSSVRSRSS) the composition is skewed to low complexity. Residues 493–505 (QFRRSISIDRGQR) are compositionally biased toward basic and acidic residues.

Belongs to the SDS23 family.

The protein resides in the cytoplasm. It is found in the nucleus. Its function is as follows. Involved in DNA replication and cell separation. The chain is Protein SDS23 (SDS23) from Yarrowia lipolytica (strain CLIB 122 / E 150) (Yeast).